The primary structure comprises 471 residues: Probable nucleoredoxin 3 (471 aa).

Thioredoxin domains follow at residues 15-173 (VSIP…ARRQ) and 179-334 (QLLG…KERD).

Belongs to the nucleoredoxin family.

It catalyses the reaction [protein]-dithiol + NAD(+) = [protein]-disulfide + NADH + H(+). It carries out the reaction [protein]-dithiol + NADP(+) = [protein]-disulfide + NADPH + H(+). Functionally, probable thiol-disulfide oxidoreductase that may participate in various redox reactions. The sequence is that of Probable nucleoredoxin 3 from Oryza sativa subsp. japonica (Rice).